The sequence spans 525 residues: MALDIHAHRILILDFGSQYTQLIARRVREIGVYCELHPFDMDDEAIREFNPRGIILAGGPESVHEANSPRAPQAVFDLKVPVLGICYGMQTMAEQMGGKVEGSDLREFGYARVDVVGKSRLLDGIEDHVDDDGVLGLDVWMSHGDKVTQMPGNFSVLASTPSCPIAGMYDDALGYYGVQFHPEVTHTKQGGRILSRFVQDICGCEALWTASNIVEDAIAQVRAQVGSANVLLGLSGGVDSSVVAALLHRAIGDQLTCVFVDNGLLRLHEGDQVMAMFKENMGVKVIRADAEKQFLDNLEGEADPEKKRKIIGRTFIDVFDAEASKLENIQFLAQGTIYPDVIESAGAKSGKAHVIKSHHNVGGLPEEMNLKLVEPLRELFKDEVRKIGLELGLPYDMVYRHPFPGPGLGVRILGEVKKEYADILRRADHIFIEELRKADWYHKTSQAFVVFQPVKSVGVVGDGRRYAWVVALRAVETVDFMTARWAHLPYELLETVSGRIINEIDGISRVTYDVSSKPPATIEWE.

The Glutamine amidotransferase type-1 domain maps to 9–207 (RILILDFGSQ…VQDICGCEAL (199 aa)). The active-site Nucleophile is the Cys86. Residues His181 and Glu183 contribute to the active site. The GMPS ATP-PPase domain maps to 208–400 (WTASNIVEDA…LGLPYDMVYR (193 aa)). Position 235–241 (235–241 (SGGVDSS)) interacts with ATP.

In terms of assembly, homodimer.

The enzyme catalyses XMP + L-glutamine + ATP + H2O = GMP + L-glutamate + AMP + diphosphate + 2 H(+). Its pathway is purine metabolism; GMP biosynthesis; GMP from XMP (L-Gln route): step 1/1. Catalyzes the synthesis of GMP from XMP. The sequence is that of GMP synthase [glutamine-hydrolyzing] from Pseudomonas entomophila (strain L48).